A 70-amino-acid polypeptide reads, in one-letter code: MGSFSVWHWLIVLVIVLVLFGRGKIPELMGDVAKGIKSFKKGMADEDQTPPPADANANAKTVDHKADEIK.

The helical transmembrane segment at 1–21 threads the bilayer; that stretch reads MGSFSVWHWLIVLVIVLVLFG. Positions 42 to 70 are disordered; the sequence is GMADEDQTPPPADANANAKTVDHKADEIK. Basic and acidic residues predominate over residues 61–70; that stretch reads TVDHKADEIK.

Belongs to the TatA/E family. In terms of assembly, the Tat system comprises two distinct complexes: a TatABC complex, containing multiple copies of TatA, TatB and TatC subunits, and a separate TatA complex, containing only TatA subunits. Substrates initially bind to the TatABC complex, which probably triggers association of the separate TatA complex to form the active translocon.

Its subcellular location is the cell inner membrane. In terms of biological role, part of the twin-arginine translocation (Tat) system that transports large folded proteins containing a characteristic twin-arginine motif in their signal peptide across membranes. TatA could form the protein-conducting channel of the Tat system. This chain is Sec-independent protein translocase protein TatA, found in Agrobacterium fabrum (strain C58 / ATCC 33970) (Agrobacterium tumefaciens (strain C58)).